The primary structure comprises 89 residues: VPTQRLCGSHLVDALYFVCGERGFFYSPKQIRDVGPLSAFRDLEPPLDTEMEDRFPYRQQLAGSKMKRGIVEQCCHNTCSLVNLEGYCN.

Intrachain disulfides connect Cys-7–Cys-75, Cys-19–Cys-88, and Cys-74–Cys-79. The propeptide at 33–66 is c peptide; it reads DVGPLSAFRDLEPPLDTEMEDRFPYRQQLAGSKM.

The protein belongs to the insulin family. In terms of assembly, heterodimer of a B chain and an A chain linked by two disulfide bonds.

Its subcellular location is the secreted. Functionally, insulin decreases blood glucose concentration. It increases cell permeability to monosaccharides, amino acids and fatty acids. It accelerates glycolysis, the pentose phosphate cycle, and glycogen synthesis in liver. This is Insulin (ins) from Callorhinchus milii (Ghost shark).